A 149-amino-acid chain; its full sequence is Nucleoside diphosphate kinase 1 (149 aa).

ATP contacts are provided by Lys10, Phe58, Arg86, Thr92, Arg103, and Asn113. His116 functions as the Pros-phosphohistidine intermediate in the catalytic mechanism.

It belongs to the NDK family. The cofactor is Mg(2+).

It carries out the reaction a 2'-deoxyribonucleoside 5'-diphosphate + ATP = a 2'-deoxyribonucleoside 5'-triphosphate + ADP. The enzyme catalyses a ribonucleoside 5'-diphosphate + ATP = a ribonucleoside 5'-triphosphate + ADP. Its function is as follows. Major role in the synthesis of nucleoside triphosphates other than ATP. The ATP gamma phosphate is transferred to the NDP beta phosphate via a ping-pong mechanism, using a phosphorylated active-site intermediate. This NDK is microtubule-associated. The chain is Nucleoside diphosphate kinase 1 (NDPK1) from Pisum sativum (Garden pea).